Consider the following 194-residue polypeptide: Thymidylate kinase (194 aa).

7–14 contributes to the ATP binding site; the sequence is GVDCVGKS.

It belongs to the thymidylate kinase family.

The enzyme catalyses dTMP + ATP = dTDP + ADP. Phosphorylation of dTMP to form dTDP in both de novo and salvage pathways of dTTP synthesis. This Campylobacter lari (strain RM2100 / D67 / ATCC BAA-1060) protein is Thymidylate kinase.